The sequence spans 201 residues: Pyridoxine/pyridoxamine 5'-phosphate oxidase (201 aa).

FMN is bound by residues 45–50 (RMVLLK), 65–66 (YT), arginine 71, lysine 72, and glutamine 94. Lysine 50 is a substrate binding site. Substrate-binding residues include tyrosine 112, arginine 116, and serine 120. Residues 129–130 (QS) and tryptophan 174 contribute to the FMN site. Position 180-182 (180-182 (RLH)) interacts with substrate. Position 184 (arginine 184) interacts with FMN.

Belongs to the pyridoxamine 5'-phosphate oxidase family. Homodimer. It depends on FMN as a cofactor.

It catalyses the reaction pyridoxamine 5'-phosphate + O2 + H2O = pyridoxal 5'-phosphate + H2O2 + NH4(+). It carries out the reaction pyridoxine 5'-phosphate + O2 = pyridoxal 5'-phosphate + H2O2. Its pathway is cofactor metabolism; pyridoxal 5'-phosphate salvage; pyridoxal 5'-phosphate from pyridoxamine 5'-phosphate: step 1/1. The protein operates within cofactor metabolism; pyridoxal 5'-phosphate salvage; pyridoxal 5'-phosphate from pyridoxine 5'-phosphate: step 1/1. Functionally, catalyzes the oxidation of either pyridoxine 5'-phosphate (PNP) or pyridoxamine 5'-phosphate (PMP) into pyridoxal 5'-phosphate (PLP). The sequence is that of Pyridoxine/pyridoxamine 5'-phosphate oxidase from Rhodospirillum rubrum (strain ATCC 11170 / ATH 1.1.1 / DSM 467 / LMG 4362 / NCIMB 8255 / S1).